Consider the following 265-residue polypeptide: MDICICYFFTILTTISCWNVTSYSKNSDFQYLSSKNFLDQLQIASNKTVIDIGCGNGKITNYISSLVKDGSVIGIDKDSSMIKYAKETYPNVDFKVMDIQNENIDKKYDIVVSFFCLPWIVNKQASFHHISNMMKSGSKLYILAAIMETNHVTLINNLMKKDHWKLFFVNYSSPFDYLNDIQYDIYANQSGIEQKKFKVYNIPYTFKDRQSLHKFNLAILPQLNQLSIEHREIFITELLNDYFSFIGSVNLTINFTIVKFIGCRV.

The signal sequence occupies residues 1–17; sequence MDICICYFFTILTTISC.

This sequence belongs to the methyltransferase superfamily.

The sequence is that of Putative methyltransferase 235L from Acheta domesticus (House cricket).